The primary structure comprises 484 residues: Glycogen synthase (484 aa).

Lys18 contributes to the ADP-alpha-D-glucose binding site.

It belongs to the glycosyltransferase 1 family. Bacterial/plant glycogen synthase subfamily.

It carries out the reaction [(1-&gt;4)-alpha-D-glucosyl](n) + ADP-alpha-D-glucose = [(1-&gt;4)-alpha-D-glucosyl](n+1) + ADP + H(+). It functions in the pathway glycan biosynthesis; glycogen biosynthesis. In terms of biological role, synthesizes alpha-1,4-glucan chains using ADP-glucose. This Vibrio cholerae serotype O1 (strain ATCC 39541 / Classical Ogawa 395 / O395) protein is Glycogen synthase.